The chain runs to 101 residues: Ribonuclease kappa-B (101 aa).

2 helical membrane passes run 13-33 (ACGI…GVFF) and 68-88 (VSYN…FSFC).

It belongs to the RNase K family.

It localises to the membrane. In terms of biological role, endoribonuclease which preferentially cleaves ApU and ApG phosphodiester bonds. This chain is Ribonuclease kappa-B (rnasek-b), found in Xenopus laevis (African clawed frog).